A 418-amino-acid polypeptide reads, in one-letter code: UPF0261 protein BRA1168/BS1330_II1159 (418 aa).

The protein belongs to the UPF0261 family.

The protein is UPF0261 protein BRA1168/BS1330_II1159 of Brucella suis biovar 1 (strain 1330).